The chain runs to 273 residues: Nickel permease LarQ (273 aa).

5 consecutive transmembrane segments (helical) span residues 64 to 84, 117 to 137, 159 to 179, 210 to 230, and 251 to 271; these read LIQL…ILLW, MLFV…FFGL, LAGL…AIAI, LIGA…LELY, and HWRD…FIFW.

It belongs to the CbiQ family. In terms of assembly, may form an energy-coupling factor (ECF) transporter complex composed of an ATP-binding protein (A component, LarO), a transmembrane protein (T component, LarQ) and a fused possible substrate-capture protein (S component, LarMN) of unknown stoichiometry.

The protein localises to the cell membrane. Functionally, probable transmembrane component of the energy-coupling factor (ECF) transporter complex LarMNQO involved in nickel import. This Lactiplantibacillus plantarum (strain ATCC BAA-793 / NCIMB 8826 / WCFS1) (Lactobacillus plantarum) protein is Nickel permease LarQ.